Reading from the N-terminus, the 149-residue chain is Transcriptional regulator MraZ (149 aa).

2 consecutive SpoVT-AbrB domains span residues 6–52 and 81–124; these read RSYR…TPED and VEEL…SEEE.

It belongs to the MraZ family. Forms oligomers.

It localises to the cytoplasm. The protein localises to the nucleoid. The protein is Transcriptional regulator MraZ of Oleidesulfovibrio alaskensis (strain ATCC BAA-1058 / DSM 17464 / G20) (Desulfovibrio alaskensis).